The sequence spans 95 residues: UPF0473 protein PEPE_1260 (95 aa).

It belongs to the UPF0473 family.

In Pediococcus pentosaceus (strain ATCC 25745 / CCUG 21536 / LMG 10740 / 183-1w), this protein is UPF0473 protein PEPE_1260.